The following is a 479-amino-acid chain: Citrate synthase, mitochondrial (479 aa).

The N-terminal 37 residues, 1-37 (MSAILSTTSKSFLSRGSTRQCQNMQKALFALLNARHY), are a transit peptide targeting the mitochondrion. Catalysis depends on residues His312, His358, and Asp413. Ser462 carries the phosphoserine modification.

It belongs to the citrate synthase family. In terms of assembly, monomer and homodimer. Exists as an inactive monomer when phosphorylated. Homodimerization is dependent on dephosphorylation of Ser-462 by PTC7 and is required for activity. In terms of processing, phosphorylation at Ser-462. Dephosphorylated at Ser-462 by PTC7.

The protein localises to the mitochondrion matrix. The enzyme catalyses oxaloacetate + acetyl-CoA + H2O = citrate + CoA + H(+). The protein operates within carbohydrate metabolism; tricarboxylic acid cycle; isocitrate from oxaloacetate: step 1/2. With respect to regulation, phosphorylation at Ser-462 inhibits catalytic activity. Dephosphorylation at Ser-462 by PTC7 enhances catalytic activity. Functionally, specific citrate synthase with catalytic activity only with acetyl-CoA. The protein is Citrate synthase, mitochondrial of Saccharomyces cerevisiae (strain ATCC 204508 / S288c) (Baker's yeast).